The following is an 855-amino-acid chain: Axonemal dynein light chain domain-containing protein 1 (855 aa).

Polar residues predominate over residues 1 to 17 (MSLPKTPSTPLNSASTS). The disordered stretch occupies residues 1–31 (MSLPKTPSTPLNSASTSESKKLVSVATEGTR). Coiled-coil stretches lie at residues 316–402 (QRIL…WSSA), 451–480 (LQKLTQKWRNLVNKFKQEVEEMEESTRETL), and 571–596 (SERQYMEEIIKNIQKLYKEYEIRING).

The protein localises to the cytoplasm. In terms of biological role, may be essential for spermiogenesis and male fertility probably by regulating the manchette dynamics, spermatid head shaping and sperm flagellum assembly. The polypeptide is Axonemal dynein light chain domain-containing protein 1 (AXDND1) (Macaca fascicularis (Crab-eating macaque)).